The primary structure comprises 466 residues: 3-isopropylmalate dehydratase large subunit (466 aa).

[4Fe-4S] cluster contacts are provided by Cys-347, Cys-407, and Cys-410.

This sequence belongs to the aconitase/IPM isomerase family. LeuC type 1 subfamily. Heterodimer of LeuC and LeuD. [4Fe-4S] cluster serves as cofactor.

The enzyme catalyses (2R,3S)-3-isopropylmalate = (2S)-2-isopropylmalate. The protein operates within amino-acid biosynthesis; L-leucine biosynthesis; L-leucine from 3-methyl-2-oxobutanoate: step 2/4. Catalyzes the isomerization between 2-isopropylmalate and 3-isopropylmalate, via the formation of 2-isopropylmaleate. This Citrobacter koseri (strain ATCC BAA-895 / CDC 4225-83 / SGSC4696) protein is 3-isopropylmalate dehydratase large subunit.